The following is a 472-amino-acid chain: Sulfate adenylyltransferase subunit 1 (472 aa).

In terms of domain architecture, tr-type G spans 24–240 (KSLLRFLTCG…ENAEVGTRDL (217 aa)). Positions 33 to 40 (GSVDDGKS) are G1. Residue 33–40 (GSVDDGKS) coordinates GTP. A G2 region spans residues 91 to 95 (GITID). The G3 stretch occupies residues 112-115 (DTPG). GTP is bound by residues 112-116 (DTPGH) and 167-170 (NKMD). Positions 167-170 (NKMD) are G4. The interval 204–206 (SAL) is G5.

It belongs to the TRAFAC class translation factor GTPase superfamily. Classic translation factor GTPase family. CysN/NodQ subfamily. In terms of assembly, heterodimer composed of CysD, the smaller subunit, and CysN.

The catalysed reaction is sulfate + ATP + H(+) = adenosine 5'-phosphosulfate + diphosphate. Its pathway is sulfur metabolism; hydrogen sulfide biosynthesis; sulfite from sulfate: step 1/3. In terms of biological role, with CysD forms the ATP sulfurylase (ATPS) that catalyzes the adenylation of sulfate producing adenosine 5'-phosphosulfate (APS) and diphosphate, the first enzymatic step in sulfur assimilation pathway. APS synthesis involves the formation of a high-energy phosphoric-sulfuric acid anhydride bond driven by GTP hydrolysis by CysN coupled to ATP hydrolysis by CysD. The sequence is that of Sulfate adenylyltransferase subunit 1 from Tolumonas auensis (strain DSM 9187 / NBRC 110442 / TA 4).